Reading from the N-terminus, the 452-residue chain is CCA-adding enzyme (452 aa).

Residues Ser-54 and Arg-57 each coordinate ATP. Residues Ser-54 and Arg-57 each coordinate CTP. Residues Asp-66, Asp-68, and Asp-117 each contribute to the Mg(2+) site. His-140, Lys-160, and Tyr-169 together coordinate ATP. CTP contacts are provided by His-140, Lys-160, and Tyr-169.

It belongs to the tRNA nucleotidyltransferase/poly(A) polymerase family. Archaeal CCA-adding enzyme subfamily. As to quaternary structure, homodimer. Requires Mg(2+) as cofactor.

The catalysed reaction is a tRNA precursor + 2 CTP + ATP = a tRNA with a 3' CCA end + 3 diphosphate. It catalyses the reaction a tRNA with a 3' CCA end + 2 CTP + ATP = a tRNA with a 3' CCACCA end + 3 diphosphate. Catalyzes the addition and repair of the essential 3'-terminal CCA sequence in tRNAs without using a nucleic acid template. Adds these three nucleotides in the order of C, C, and A to the tRNA nucleotide-73, using CTP and ATP as substrates and producing inorganic pyrophosphate. tRNA 3'-terminal CCA addition is required both for tRNA processing and repair. Also involved in tRNA surveillance by mediating tandem CCA addition to generate a CCACCA at the 3' terminus of unstable tRNAs. While stable tRNAs receive only 3'-terminal CCA, unstable tRNAs are marked with CCACCA and rapidly degraded. This chain is CCA-adding enzyme, found in Halobacterium salinarum (strain ATCC 29341 / DSM 671 / R1).